A 507-amino-acid polypeptide reads, in one-letter code: Fatty acid resistance protein FarB (507 aa).

A run of 14 helical transmembrane segments spans residues Gly-8–Asp-28, Trp-52–Ala-72, Val-78–Ala-98, Ile-109–Ser-129, Met-136–Leu-156, Trp-164–Thr-184, Pro-199–Leu-219, Ile-233–Gly-253, Ile-274–Leu-294, Ala-303–Ile-323, Leu-334–Tyr-354, Ile-363–Ile-383, Leu-399–Trp-419, and Ile-478–Pro-498.

The protein belongs to the major facilitator superfamily. EmrB family. Probably part of a tripartite efflux system FarAB-MtrE, which is composed of an inner membrane transporter, FarB, a periplasmic membrane fusion protein, FarA, and an outer membrane component, MtrE.

The protein localises to the cell inner membrane. Functionally, mediates resistance to long-chained antibacterial fatty acids (FAs). Function is dependent on the MtrE outer membrane protein. The chain is Fatty acid resistance protein FarB from Neisseria gonorrhoeae.